Consider the following 154-residue polypeptide: uncharacterized protein (154 aa).

Zn(2+) contacts are provided by Cys-4, Cys-7, Cys-16, Cys-19, Cys-24, Cys-28, His-32, and Cys-36. The HIT-type zinc-finger motif lies at 4–36; that stretch reads CSICNESEIKYKCPKCSFPYCSLPCWKIHQSQC.

This is an uncharacterized protein from Schizosaccharomyces pombe (strain 972 / ATCC 24843) (Fission yeast).